A 293-amino-acid chain; its full sequence is tRNA pseudouridine synthase A (293 aa).

Asp-67 functions as the Nucleophile in the catalytic mechanism. Position 125 (Tyr-125) interacts with substrate.

This sequence belongs to the tRNA pseudouridine synthase TruA family. As to quaternary structure, homodimer.

It carries out the reaction uridine(38/39/40) in tRNA = pseudouridine(38/39/40) in tRNA. Formation of pseudouridine at positions 38, 39 and 40 in the anticodon stem and loop of transfer RNAs. The polypeptide is tRNA pseudouridine synthase A (Synechococcus sp. (strain CC9605)).